A 769-amino-acid polypeptide reads, in one-letter code: Scarecrow-like protein 14 (769 aa).

Disordered regions lie at residues 1–23, 128–157, 279–320, and 364–388; these read MGSY…DFDL, PSSS…GAFS, TEKK…ERSN, and TAQS…DSKK. The GRAS domain maps to 384–765; sequence NDSKKETADL…RIVYASSLWV (382 aa). Positions 391-451 are leucine repeat I (LRI); the sequence is ADLRTLLVLC…EARLAGTGTQ (61 aa). The segment at 470–536 is VHIID; it reads YQTYMSVCPF…GGSPKLRITG (67 aa). The VHIID motif lies at 501 to 505; the sequence is IHIID. Residues 552–584 are leucine repeat II (LRII); it reads ETGHRLARYCQRHNVPFEYNAIAQKWETIQVED. Residues 593-687 form a PFYRE region; that stretch reads VVVNSLFRFR…KEFYGREIVN (95 aa). The SAW stretch occupies residues 690 to 765; the sequence is ACEGTERVER…RIVYASSLWV (76 aa).

Belongs to the GRAS family. As to expression, expressed in roots, shoots, flowers and siliques.

The protein resides in the nucleus. Its function is as follows. Probable transcription factor involved in plant development. The protein is Scarecrow-like protein 14 (SCL14) of Arabidopsis thaliana (Mouse-ear cress).